Consider the following 95-residue polypeptide: Large ribosomal subunit protein bL27 (95 aa).

Positions M1–F9 are excised as a propeptide.

Belongs to the bacterial ribosomal protein bL27 family. Post-translationally, the N-terminus is cleaved by ribosomal processing cysteine protease Prp.

The sequence is that of Large ribosomal subunit protein bL27 from Agathobacter rectalis (strain ATCC 33656 / DSM 3377 / JCM 17463 / KCTC 5835 / VPI 0990) (Eubacterium rectale).